Consider the following 217-residue polypeptide: Uracil-DNA glycosylase (217 aa).

Asp-62 (proton acceptor) is an active-site residue.

This sequence belongs to the uracil-DNA glycosylase (UDG) superfamily. UNG family.

It is found in the cytoplasm. The enzyme catalyses Hydrolyzes single-stranded DNA or mismatched double-stranded DNA and polynucleotides, releasing free uracil.. Its function is as follows. Excises uracil residues from the DNA which can arise as a result of misincorporation of dUMP residues by DNA polymerase or due to deamination of cytosine. This chain is Uracil-DNA glycosylase, found in Streptococcus equi subsp. zooepidemicus (strain MGCS10565).